Reading from the N-terminus, the 624-residue chain is MSSSQAEGVIRNIIREISQTCLSRGQTLSETLIAFMVKAVVLDPTNHFNVDRTLTKQDVQKLIELCVDRLMDQTSPTLQTIKMQVYFDMNYTPRREFLEMQQKLLQSRLQSLSREITDSRAKSREDLKKLYGTIVHYIIQSSNLSSSTDINTVRETTAALQSIFPPSQLGSFMSLLKSDKEQQLKENSLIVSGIRLFNKDNGEGGEAIQSLPSILNEKLPGVVSDLERELASCERLCWQYTGLLELISERDTAHSQSPVPPRLLTQALYNTRQHEAFLRLTLADVILCAQEVTRLQSDLMSRMTLLRDAIHTKTTVPTTHVFPHFSAVGRLWAGLEQEMLLLSMLTNVASGLRVFLTAESLLTPDQMELPVRTDADRCSGTAEERVLVSETSSCECCFPESTADFQHLPLQYNGFCGVALVDRNGLLLPGNTSIGVLKHKEKYYAFSSRSAAYEFSCRADEYTAAVLETASRTPELIQLLQLQQHFTSSTAYSQLPAGHQSLTAGMPSGQKLLLKSISKSDAGVQTEIHPLQSNICTSYEWNEWEMRRKAIKLANLHSKVTRSSQSDWSLMRRHNSSQTFLPKDASCQTKRDGESLVPKAQVYLSSLRGAAGFRKVDLSRAVDE.

The protein belongs to the CFAP206 family.

The protein localises to the cytoplasm. Its subcellular location is the cytoskeleton. The protein resides in the cilium axoneme. It is found in the cilium basal body. In terms of biological role, essential for sperm motility and is involved in the regulation of the beating frequency of motile cilia on the epithelial cells of the respiratory tract. Required for the establishment of radial spokes in sperm flagella. The polypeptide is Cilia- and flagella-associated protein 206 (cfap206) (Danio rerio (Zebrafish)).